The sequence spans 474 residues: E3 ubiquitin-protein ligase CBL-C (474 aa).

A 4H region spans residues P7 to C145. The 315-residue stretch at P7 to E321 folds into the Cbl-PTB domain. The EF-hand-like stretch occupies residues G146–F218. Ca(2+) contacts are provided by D199, T201, and E210. The interval Q219–E321 is SH2-like. R264 is a 4-O-phospho-L-tyrosine binding site. The interval L322 to L350 is linker. At Y341 the chain carries Phosphotyrosine; by SRC. The RING-type zinc finger occupies C351–R390. The interaction with RET stretch occupies residues C351 to A474. Residues T409–A474 form a disordered region. The span at S432–D441 shows a compositional bias: pro residues.

As to quaternary structure, interacts with ubiquitin-conjugating enzyme E2 UBE2D2 and UBE2D3. Isoform 1 interacts with EGFR (tyrosine phosphorylated). Interacts with the SH3 domain proteins LYN and CRK. Interacts (via RING-type zinc finger) with TGFB1I1 (via LIM zinc-binding domain 2); the interaction is direct and enhances the E3 activity. Interacts directly with RET (inactive) and CD2AP; dissociates from RET upon RET activation by GDNF which also increases the interaction with CD2AP suggesting dissociation as CBLC:CD2AP complex. Interacts with SRC; the interaction is enhanced when SRC is phosphorylated at 'Tyr-419'. Post-translationally, phosphorylated on multiple tyrosine residues by SRC. Isoform 1, but not isoform 2, is phosphorylated on tyrosines by EGFR. Autoubiquitinated when phosphorylated at Tyr-341, enhanced by SRC; suggesting proteasomal degradation. As to expression, ubiquitous.

It catalyses the reaction S-ubiquitinyl-[E2 ubiquitin-conjugating enzyme]-L-cysteine + [acceptor protein]-L-lysine = [E2 ubiquitin-conjugating enzyme]-L-cysteine + N(6)-ubiquitinyl-[acceptor protein]-L-lysine.. Its activity is regulated as follows. Phosphorylation at Tyr-341 is necessary and sufficient for the activation of E3 activity. Its function is as follows. Acts as an E3 ubiquitin-protein ligase, which accepts ubiquitin from specific E2 ubiquitin-conjugating enzymes, and then transfers it to substrates promoting their degradation by the proteasome. Functionally coupled with the E2 ubiquitin-protein ligases UB2D1, UB2D2 and UB2D3. Regulator of EGFR mediated signal transduction; upon EGF activation, ubiquitinates EGFR. Isoform 1, but not isoform 2, inhibits EGF stimulated MAPK1 activation. Promotes ubiquitination of SRC phosphorylated at 'Tyr-419'. In collaboration with CD2AP may act as regulatory checkpoint for Ret signaling by modulating the rate of RET degradation after ligand activation; CD2AP converts it from an inhibitor to a promoter of RET degradation; the function limits the potency of GDNF on neuronal survival. In Homo sapiens (Human), this protein is E3 ubiquitin-protein ligase CBL-C (CBLC).